The chain runs to 1220 residues: Plasma membrane calcium-transporting ATPase 1 (1220 aa).

Gly-2 carries the N-acetylglycine modification. Residues 2–105 (GDMANNSVAY…KTFLQLVWEA (104 aa)) are Cytoplasmic-facing. A phosphoserine mark is found at Ser-8 and Ser-17. A helical transmembrane segment spans residues 106–126 (LQDVTLIILEIAAIVSLGLSF). The Extracellular portion of the chain corresponds to 127 to 154 (YQPPEGDNALCGEVSVGEEEGEGETGWI). A helical transmembrane segment spans residues 155–175 (EGAAILLSVVCVVLVTAFNDW). Over 176-366 (SKEKQFRGLQ…KEKSVLQGKL (191 aa)) the chain is Cytoplasmic. The interval 297–356 (EEEKKDEKKKEKKNKKQDGAIENRNKAKAQDGAAMEMQPLKSEEGGDGDEKDKKKANLPK) is disordered. Basic and acidic residues-rich tracts occupy residues 312–325 (KQDG…KAKA) and 337–356 (KSEE…NLPK). Phosphoserine is present on Ser-338. The helical transmembrane segment at 367 to 386 (TKLAVQIGKAGLLMSAITVI) threads the bilayer. Over 387–418 (ILVLYFVIDTFWVQKRPWLAECTPIYIQYFVK) the chain is Extracellular. Residues 419-439 (FFIIGVTVLVVAVPEGLPLAV) form a helical membrane-spanning segment. Over 440–855 (TISLAYSVKK…RNVYDSISKF (416 aa)) the chain is Cytoplasmic. The active-site 4-aspartylphosphate intermediate is Asp-475. Mg(2+) is bound by residues Asp-475, Thr-477, and Asp-797. Residues 856–876 (LQFQLTVNVVAVIVAFTGACI) traverse the membrane as a helical segment. The Extracellular segment spans residues 877 to 882 (TQDSPL). A helical membrane pass occupies residues 883 to 903 (KAVQMLWVNLIMDTLASLALA). The Cytoplasmic portion of the chain corresponds to 904–927 (TEPPTESLLLRKPYGRNKPLISRT). The helical transmembrane segment at 928 to 948 (MMKNILGHAFYQLVVVFTLLF) threads the bilayer. Residues 949-971 (AGEKFFDIDSGRNAPLHAPPSEH) lie on the Extracellular side of the membrane. The helical transmembrane segment at 972–991 (YTIVFNTFVLMQLFNEINAR) threads the bilayer. The Cytoplasmic portion of the chain corresponds to 992–1005 (KIHGERNVFEGIFN). Residues 1006–1027 (NAIFCTIVLGTFVVQIIIVQFG) form a helical membrane-spanning segment. Topologically, residues 1028–1039 (GKPFSCSELSIE) are extracellular. Residues 1040-1060 (QWLWSIFLGMGTLLWGQLIST) form a helical membrane-spanning segment. Over 1061 to 1220 (IPTSRLKFLK…SPLHSLETSL (160 aa)) the chain is Cytoplasmic. Positions 1100-1117 (LRRGQILWFRGLNRIQTQ) are calmodulin-binding subdomain A. Residue Thr-1116 is modified to Phosphothreonine; by PKC. A required for basolateral membrane targeting region spans residues 1118–1220 (IRVVNAFRSS…SPLHSLETSL (103 aa)). Ser-1140 and Ser-1155 each carry phosphoserine. A disordered region spans residues 1162-1220 (IDDTDAEDDAPTKRNSSPPPSPNKNNNAVDSGIHLTIEMNKSATSSSPGSPLHSLETSL). Residue Thr-1165 is modified to Phosphothreonine. A Phosphoserine; by PKA modification is found at Ser-1177. Residues Ser-1178 and Ser-1182 each carry the phosphoserine modification. Residues 1200–1220 (MNKSATSSSPGSPLHSLETSL) show a composition bias toward polar residues.

This sequence belongs to the cation transport ATPase (P-type) (TC 3.A.3) family. Type IIB subfamily. In terms of assembly, monomer. Dimer. Oligomer. Calmodulin binding. Interacts with PDZD11. Interacts with SLC35G1 and STIM1. Interacts with YWHAE; interacts with the monomeric and dimeric forms of the YWHAE but prefer the monomer form; this interaction inhibits calcium-transporting ATPase activity. Interacts with NPTN; this interaction stabilizes ATP2B1 and increases ATPase activity; this interaction controls T cell calcium homeostasis following T cell activation. Interacts with EPB41; regulates small intestinal calcium absorption through regulation of membrane expression of ATP2B1. As to expression, isoform B is ubiquitously expressed. Isoforms A and E have only been found in brain cortex. Isoform C is found in brain cortex, skeletal muscle and heart muscle. Isoform D has only been found in fetal skeletal muscle. Isoform K has been found in small intestine and liver. Isoform B is expressed in hair cells of inner ear.

The protein resides in the cell membrane. Its subcellular location is the basolateral cell membrane. It is found in the synapse. It localises to the presynaptic cell membrane. The protein localises to the cytoplasmic vesicle. The protein resides in the secretory vesicle. Its subcellular location is the synaptic vesicle membrane. The catalysed reaction is Ca(2+)(in) + ATP + H2O = Ca(2+)(out) + ADP + phosphate + H(+). Functionally, catalyzes the hydrolysis of ATP coupled with the transport of calcium from the cytoplasm to the extracellular space thereby maintaining intracellular calcium homeostasis. Plays a role in blood pressure regulation through regulation of intracellular calcium concentration and nitric oxide production leading to regulation of vascular smooth muscle cells vasoconstriction. Positively regulates bone mineralization through absorption of calcium from the intestine. Plays dual roles in osteoclast differentiation and survival by regulating RANKL-induced calcium oscillations in preosteoclasts and mediating calcium extrusion in mature osteoclasts. Regulates insulin sensitivity through calcium/calmodulin signaling pathway by regulating AKT1 activation and NOS3 activation in endothelial cells. May play a role in synaptic transmission by modulating calcium and proton dynamics at the synaptic vesicles. In Rattus norvegicus (Rat), this protein is Plasma membrane calcium-transporting ATPase 1.